Here is an 893-residue protein sequence, read N- to C-terminus: UPF0182 protein CLM_0018 (893 aa).

A run of 7 helical transmembrane segments spans residues 9 to 29 (IPLFIIILFIAFFNKIINFII), 49 to 69 (AIIILMIPIFIIFFISIWMYY), 94 to 114 (LFFIFNFIVSIFLAYIFSSSY), 154 to 174 (VIISLLLFLVITTFIAYFILE), 202 to 222 (LAIVSGLIILFISFGHLIKIW), 246 to 266 (FYKIIVVITLISSIVTLLSIV), and 273 to 293 (VSVCIGITIFLIVSQNIASFL).

The protein belongs to the UPF0182 family.

It is found in the cell membrane. This Clostridium botulinum (strain Kyoto / Type A2) protein is UPF0182 protein CLM_0018.